Reading from the N-terminus, the 306-residue chain is MKRCLRNGNGVNEDRISDLPEALLLQILSMLPVKDVVTTSVLSKPWRSLWKLVPTLKFDYENNQSEDETYSEIVCRLLLSNKAPFLESLHLGFRFGECRSVEVGMWIGIAYARHVRDLVLHVESVKGSFIFPTGLYNCETLESLTLRSWVLVDVPSPACLKSLRTLRLENVDYKYDDSVYNLLSGCPNLENLVVYRGNLLEVETFTIAVPSLQRLTIYDDNDGEYCTGYVINAPSLKYLKIDGFKALESCLIENAPELVEATIMNVSKIINEKLLETLTSVKRLSLALSPLELKFSCNNYSGHLLL.

The region spanning 13–73 (EDRISDLPEA…QSEDETYSEI (61 aa)) is the F-box domain. LRR repeat units follow at residues 67 to 93 (DETYSEIVCRLLLSNKAPFLESLHLGF), 98 to 122 (CRSVEVGMWIGIAYARHVRDLVLHV), 138 to 170 (CETLESLTLRSWVLVDVPSPACLKSLRTLRLEN), 171 to 196 (VDYKYDDSVYNLLSGCPNLENLVVYR), 215 to 243 (LTIYDDNDGEYCTGYVINAPSLKYLKIDG), and 263 to 288 (IMNVSKIINEKLLETLTSVKRLSLAL).

In Arabidopsis thaliana (Mouse-ear cress), this protein is F-box/LRR-repeat protein At3g26922.